The sequence spans 1000 residues: Vacuolar sorting protein 39 (1000 aa).

Positions 16–282 constitute a CNH domain; the sequence is PARIDAVESY…RRLVKSNNAV (267 aa). The tract at residues 394–413 is disordered; the sequence is DEASLSRGSSGISDDMESSS. One copy of the CHCR repeat lies at 607–796; the sequence is YSMLVLESCP…YLNPKKSAKD (190 aa). The interval 844–864 is disordered; that stretch reads GLSSSTDSGRSDVDTEEPLEE.

The protein belongs to the VAM6/VPS39 family. As to quaternary structure, homooligomer. Component of the homotypic fusion and vacuole protein sorting (HOPS) complex composed of the class C Vps core proteins VPS11, VCL1, VPS18 and VPS33, which in HOPS further associates with VPS39 and VPS41. Interacts directly with VPS11. Binds to RABG3B.

It localises to the cytoplasm. The protein localises to the vacuole membrane. In terms of biological role, essential protein required during embryogenesis. Believed to act in part as a component of the putative HOPS endosomal tethering complex. HOPS is required for the central vacuole formation. May play a role in clustering and fusion of late endosomes and lysosomes. Plays a role in vesicle-mediated protein trafficking to lysosomal compartments including the endocytic membrane transport and autophagic pathways. Required for fusion of endosomes and autophagosomes with lysosomes. In Arabidopsis thaliana (Mouse-ear cress), this protein is Vacuolar sorting protein 39.